Here is a 341-residue protein sequence, read N- to C-terminus: Anthranilate phosphoribosyltransferase (341 aa).

5-phospho-alpha-D-ribose 1-diphosphate-binding positions include glycine 81, 84–85 (GD), 91–94 (NVST), 109–117 (KHGNRSVSS), and serine 121. Glycine 81 provides a ligand contact to anthranilate. Serine 93 is a Mg(2+) binding site. Asparagine 112 lines the anthranilate pocket. Arginine 167 provides a ligand contact to anthranilate. The Mg(2+) site is built by aspartate 226 and glutamate 227.

The protein belongs to the anthranilate phosphoribosyltransferase family. As to quaternary structure, homodimer. The cofactor is Mg(2+).

The enzyme catalyses N-(5-phospho-beta-D-ribosyl)anthranilate + diphosphate = 5-phospho-alpha-D-ribose 1-diphosphate + anthranilate. The protein operates within amino-acid biosynthesis; L-tryptophan biosynthesis; L-tryptophan from chorismate: step 2/5. In terms of biological role, catalyzes the transfer of the phosphoribosyl group of 5-phosphorylribose-1-pyrophosphate (PRPP) to anthranilate to yield N-(5'-phosphoribosyl)-anthranilate (PRA). The protein is Anthranilate phosphoribosyltransferase of Saccharophagus degradans (strain 2-40 / ATCC 43961 / DSM 17024).